We begin with the raw amino-acid sequence, 179 residues long: Embryo-specific protein ATS3A (179 aa).

Residues 1–22 (MLRLAIPLFLFALCSFTLFSSA) form the signal peptide. The PLAT domain occupies 48 to 158 (CSYTVIIKTS…NSVWYGFNVC (111 aa)).

As to quaternary structure, interacts with EULS3 (via N-terminus). In terms of tissue distribution, expressed in roots, rosette leaves, stems, cauline leaves and flowers.

It is found in the secreted. Functionally, may play a role during embryo development. The protein is Embryo-specific protein ATS3A of Arabidopsis thaliana (Mouse-ear cress).